The sequence spans 62 residues: MLILTRKVGESLLIGDDISITILNIRGNQVKIGIKAPKDVSVHREEIYQRIKQALEAPHVGE.

It belongs to the CsrA/RsmA family. As to quaternary structure, homodimer; the beta-strands of each monomer intercalate to form a hydrophobic core, while the alpha-helices form wings that extend away from the core.

Its subcellular location is the cytoplasm. In terms of biological role, a key translational regulator that binds mRNA to regulate translation initiation and/or mRNA stability. Mediates global changes in gene expression, shifting from rapid growth to stress survival by linking envelope stress, the stringent response and the catabolite repression systems. Usually binds in the 5'-UTR; binding at or near the Shine-Dalgarno sequence prevents ribosome-binding, repressing translation, binding elsewhere in the 5'-UTR can activate translation and/or stabilize the mRNA. Its function is antagonized by small RNA(s). The protein is Translational regulator CsrA of Pasteurella multocida (strain Pm70).